Consider the following 148-residue polypeptide: uncharacterized protein (148 aa).

Over residues 36–45 the composition is skewed to low complexity; it reads PGAPSAGPMS. Residues 36–148 are disordered; the sequence is PGAPSAGPMS…SGTAFFPGTT (113 aa). The segment covering 46-55 has biased composition (polar residues); that stretch reads DSNSKGSTPR.

This is an uncharacterized protein from Bovine leukemia virus (isolate Japanese BLV-1) (BLV).